The sequence spans 431 residues: MTVKTEAAKGTLTYSRMRGMVAILIAFMKQRRMGLNDFIQKIANNSYACKHPEVQSILKISQPQEPELMNANPSPPPSPSQQINLGPSSNPHAKPSDFHFLKVIGKGSFGKVLLARHKAEEVFYAVKVLQKKAILKKKEEKHIMSERNVLLKNVKHPFLVGLHFSFQTADKLYFVLDYINGGELFYHLQRERCFLEPRARFYAAEIASALGYLHSLNIVYRDLKPENILLDSQGHIVLTDFGLCKENIEHNSTTSTFCGTPEYLAPEVLHKQPYDRTVDWWCLGAVLYEMLYGLPPFYSRNTAEMYDNILNKPLQLKPNITNSARHLLEGLLQKDRTKRLGAKDDFMEIKSHVFFSLINWDDLINKKITPPFNPNVSGPNDLRHFDPEFTEEPVPNSIGKSPDSVLVTASVKEAAEAFLGFSYAPPTDSFL.

Positions 1-60 are necessary for localization to the mitochondria; sequence MTVKTEAAKGTLTYSRMRGMVAILIAFMKQRRMGLNDFIQKIANNSYACKHPEVQSILKI. Residues 66-92 are disordered; that stretch reads PELMNANPSPPPSPSQQINLGPSSNPH. S74 is modified (phosphoserine). The residue at position 78 (S78) is a Phosphoserine; by MAPK7. A compositionally biased stretch (polar residues) spans 81-91; it reads QQINLGPSSNP. The Protein kinase domain maps to 98-355; it reads FHFLKVIGKG…FMEIKSHVFF (258 aa). ATP is bound by residues 104–112 and K127; that span reads IGKGSFGKV. Positions 131 to 141 match the Nuclear localization signal motif; the sequence is KKAILKKKEEK. D222 (proton acceptor) is an active-site residue. T256 is modified (phosphothreonine; by PDPK1). Residues 356 to 431 enclose the AGC-kinase C-terminal domain; sequence SLINWDDLIN…SYAPPTDSFL (76 aa). T369 carries the phosphothreonine; by PKA modification. 3 positions are modified to phosphoserine: S397, S401, and S422.

Belongs to the protein kinase superfamily. AGC Ser/Thr protein kinase family. Homodimer; disulfide-linked. Forms a trimeric complex with FBXW7 and NOTCH1. Interacts with MAPK3/ERK1, MAPK1/ERK2, MAP2K1/MEK1, MAP2K2/MEK2, NEDD4, NEDD4L, MAPT/TAU, MAPK7, CREB1, SLC9A3R2/NHERF2 and KCNJ1/ROMK1. Associates with the mammalian target of rapamycin complex 2 (mTORC2) via an interaction with MAPKAP1/SIN1. In terms of processing, regulated by phosphorylation. Activated by phosphorylation on Ser-422 by mTORC2, transforming it into a substrate for PDPK1 which phosphorylates it on Thr-256. Phosphorylation on Ser-397 and Ser-401 are also essential for its activity. Phosphorylation on Ser-78 by MAPK7 is required for growth factor-induced cell cycle progression. Post-translationally, ubiquitinated by NEDD4L; which promotes proteasomal degradation. Ubiquitinated by SYVN1 at the endoplasmic reticulum; which promotes rapid proteasomal degradation and maintains a high turnover rate in resting cells. Isoform 2 shows enhanced stability. Expressed in most tissues with highest levels in the pancreas, followed by placenta, kidney and lung. Isoform 2 is strongly expressed in brain and pancreas, weaker in heart, placenta, lung, liver and skeletal muscle.

The protein resides in the cytoplasm. It is found in the nucleus. The protein localises to the endoplasmic reticulum membrane. It localises to the cell membrane. Its subcellular location is the mitochondrion. The catalysed reaction is L-seryl-[protein] + ATP = O-phospho-L-seryl-[protein] + ADP + H(+). It catalyses the reaction L-threonyl-[protein] + ATP = O-phospho-L-threonyl-[protein] + ADP + H(+). With respect to regulation, two specific sites, one in the kinase domain (Thr-256) and the other in the C-terminal regulatory region (Ser-422), need to be phosphorylated for its full activation. Phosphorylation at Ser-397 and Ser-401 are also essential for its activity. Activated by WNK1, WNK2, WNK3 and WNK4; which promote phosphorylation by mTORC2. Serine/threonine-protein kinase which is involved in the regulation of a wide variety of ion channels, membrane transporters, cellular enzymes, transcription factors, neuronal excitability, cell growth, proliferation, survival, migration and apoptosis. Plays an important role in cellular stress response. Contributes to regulation of renal Na(+) retention, renal K(+) elimination, salt appetite, gastric acid secretion, intestinal Na(+)/H(+) exchange and nutrient transport, insulin-dependent salt sensitivity of blood pressure, salt sensitivity of peripheral glucose uptake, cardiac repolarization and memory consolidation. Up-regulates Na(+) channels: SCNN1A/ENAC, SCN5A and ASIC1/ACCN2, K(+) channels: KCNJ1/ROMK1, KCNA1-5, KCNQ1-5 and KCNE1, epithelial Ca(2+) channels: TRPV5 and TRPV6, chloride channels: BSND, CLCN2 and CFTR, glutamate transporters: SLC1A3/EAAT1, SLC1A2 /EAAT2, SLC1A1/EAAT3, SLC1A6/EAAT4 and SLC1A7/EAAT5, amino acid transporters: SLC1A5/ASCT2, SLC38A1/SN1 and SLC6A19, creatine transporter: SLC6A8, Na(+)/dicarboxylate cotransporter: SLC13A2/NADC1, Na(+)-dependent phosphate cotransporter: SLC34A2/NAPI-2B, glutamate receptor: GRIK2/GLUR6. Up-regulates carriers: SLC9A3/NHE3, SLC12A1/NKCC2, SLC12A3/NCC, SLC5A3/SMIT, SLC2A1/GLUT1, SLC5A1/SGLT1 and SLC15A2/PEPT2. Regulates enzymes: GSK3A/B, PMM2 and Na(+)/K(+) ATPase, and transcription factors: CTNNB1 and nuclear factor NF-kappa-B. Stimulates sodium transport into epithelial cells by enhancing the stability and expression of SCNN1A/ENAC. This is achieved by phosphorylating the NEDD4L ubiquitin E3 ligase, promoting its interaction with 14-3-3 proteins, thereby preventing it from binding to SCNN1A/ENAC and targeting it for degradation. Regulates store-operated Ca(+2) entry (SOCE) by stimulating ORAI1 and STIM1. Regulates KCNJ1/ROMK1 directly via its phosphorylation or indirectly via increased interaction with SLC9A3R2/NHERF2. Phosphorylates MDM2 and activates MDM2-dependent ubiquitination of p53/TP53. Phosphorylates MAPT/TAU and mediates microtubule depolymerization and neurite formation in hippocampal neurons. Phosphorylates SLC2A4/GLUT4 and up-regulates its activity. Phosphorylates APBB1/FE65 and promotes its localization to the nucleus. Phosphorylates MAPK1/ERK2 and activates it by enhancing its interaction with MAP2K1/MEK1 and MAP2K2/MEK2. Phosphorylates FBXW7 and plays an inhibitory role in the NOTCH1 signaling. Phosphorylates FOXO1 resulting in its relocalization from the nucleus to the cytoplasm. Phosphorylates FOXO3, promoting its exit from the nucleus and interference with FOXO3-dependent transcription. Phosphorylates BRAF and MAP3K3/MEKK3 and inhibits their activity. Phosphorylates SLC9A3/NHE3 in response to dexamethasone, resulting in its activation and increased localization at the cell membrane. Phosphorylates CREB1. Necessary for vascular remodeling during angiogenesis. Sustained high levels and activity may contribute to conditions such as hypertension and diabetic nephropathy. Isoform 2 exhibited a greater effect on cell plasma membrane expression of SCNN1A/ENAC and Na(+) transport than isoform 1. This is Serine/threonine-protein kinase Sgk1 (SGK1) from Homo sapiens (Human).